Reading from the N-terminus, the 261-residue chain is uncharacterized protein (261 aa).

6 helical membrane-spanning segments follow: residues 31–51 (TFLS…TGIV), 71–91 (TNVM…SWLL), 101–121 (LAYI…AGIA), 130–150 (LTSS…ASFI), 167–187 (LLLF…IPYV), and 213–233 (FAWL…YLAI).

The protein localises to the cell membrane. This is an uncharacterized protein from Mycoplasma genitalium (strain ATCC 33530 / DSM 19775 / NCTC 10195 / G37) (Mycoplasmoides genitalium).